The sequence spans 68 residues: MAKTKNVRVTVILECTSCAQNNVNVNKVATGISRYITQKNRHNTPNRLEFKKFCPRCYKHTLHGEIKK.

It belongs to the bacterial ribosomal protein bL33 family.

The protein resides in the plastid. The polypeptide is Large ribosomal subunit protein bL33c (Cuscuta reflexa (Southern Asian dodder)).